A 170-amino-acid chain; its full sequence is Arginine repressor (170 aa).

Belongs to the ArgR family.

Its subcellular location is the cytoplasm. The protein operates within amino-acid biosynthesis; L-arginine biosynthesis [regulation]. Functionally, regulates arginine biosynthesis genes. The sequence is that of Arginine repressor from Bifidobacterium longum (strain NCC 2705).